The chain runs to 1409 residues: MAP kinase-activating death domain protein (1409 aa).

One can recognise a uDENN domain in the interval 26 to 230 (RGASQSSPDA…VPVPGKTKVQ (205 aa)). The 140-residue stretch at 251 to 390 (RFTLIDFPLH…DATHLKERLK (140 aa)) folds into the cDENN domain. A dDENN domain is found at 392 to 496 (AINKMTTMTV…ECCLCPKNET (105 aa)). Disordered stretches follow at residues 654 to 701 (SFDH…MKGL), 761 to 784 (QHIV…QSKN), 902 to 1008 (SSSA…KVKT), and 1015 to 1034 (PQNL…SFLA). 2 stretches are compositionally biased toward polar residues: residues 680-691 (SDASDTPTSRGS) and 761-772 (QHIVRSKTQPNP). Low complexity-rich tracts occupy residues 773-784 (TSQQTANQQSKN) and 902-913 (SSSAPSTMTTPS). Basic and acidic residues predominate over residues 915-925 (HSNDILKESRP). Residues 941–961 (LGQNVTPTSTNNHEIAQSTRS) show a composition bias toward polar residues. Over residues 963-1003 (ALPPPVPPREAPPIPKRNPPPLGAPPKVPEGARAPPPLPPR) the composition is skewed to pro residues. The segment covering 1020–1031 (PNNQPAQPSSPS) has biased composition (low complexity). The Death domain maps to 1109-1184 (GMDQEPSEMI…GLVCSKEINK (76 aa)).

The protein belongs to the MADD family. In terms of assembly, interacts with cab-1. As to expression, expressed in nearly all neurons.

It is found in the cell membrane. It localises to the cytoplasm. Guanyl-nucleotide exchange factor that regulates small GTPases. Converts GDP-bound inactive form of rab-3 and cab-1 to the GTP-bound active forms. Regulator of presynaptic activity that interacts with rab-3 to regulate synaptic vesicle release. Is also a regulator of the cab-1 synaptic transmission pathway. Probably by converting rab-3 to its GTP-bound active form, plays a role in the recruitment of endophilin unc-57 to synaptic vesicles. Probably by activating rab-3 and thus regulating the trafficking of dense-core vesicles, plays a role in AVG neuron-mediated formation of the right axon tract of the ventral nerve cord. Regulates anterior body muscle contractions (aBOC) and the expulsion steps during the defecation motor program (DMP). Probably by regulating DMP, required for fatty acid uptake by intestinal cells. In Caenorhabditis elegans, this protein is MAP kinase-activating death domain protein (aex-3).